Reading from the N-terminus, the 185-residue chain is Elongation factor P (185 aa).

Belongs to the elongation factor P family.

It localises to the cytoplasm. The protein operates within protein biosynthesis; polypeptide chain elongation. Its function is as follows. Involved in peptide bond synthesis. Stimulates efficient translation and peptide-bond synthesis on native or reconstituted 70S ribosomes in vitro. Probably functions indirectly by altering the affinity of the ribosome for aminoacyl-tRNA, thus increasing their reactivity as acceptors for peptidyl transferase. The chain is Elongation factor P from Bordetella petrii (strain ATCC BAA-461 / DSM 12804 / CCUG 43448).